The chain runs to 299 residues: Probable alpha-L-glutamate ligase (299 aa).

One can recognise an ATP-grasp domain in the interval 111 to 293; the sequence is LQALAAANIA…VATQMIAYLE (183 aa). ATP-binding positions include K147, 184–185, D193, and 217–219; these read DF and RAN. The Mg(2+) site is built by D254, E266, and N268. The Mn(2+) site is built by D254, E266, and N268.

Belongs to the RimK family. It depends on Mg(2+) as a cofactor. Mn(2+) serves as cofactor.

In Mannheimia succiniciproducens (strain KCTC 0769BP / MBEL55E), this protein is Probable alpha-L-glutamate ligase.